We begin with the raw amino-acid sequence, 180 residues long: Nascent polypeptide-associated complex subunit alpha (180 aa).

One can recognise an NAC-A/B domain in the interval 16–80 (SKNEKKAREL…AKVDDMNKRI (65 aa)). The disordered stretch occupies residues 81 to 113 (AEAQQQQAQQDALSKAAGETGEAGEEDKSQDAI). A compositionally biased stretch (low complexity) spans 82 to 100 (EAQQQQAQQDALSKAAGET). One can recognise a UBA domain in the interval 142–179 (LDAKDIDIIVEQTQVSRAKAVKALRVHDGDMVNAIMEL).

This sequence belongs to the NAC-alpha family. In terms of assembly, part of the nascent polypeptide-associated complex (NAC), consisting of EGD2 and EGD1. NAC associates with ribosomes via EGD1.

Its subcellular location is the cytoplasm. It is found in the nucleus. Functionally, component of the nascent polypeptide-associated complex (NAC), a dynamic component of the ribosomal exit tunnel, protecting the emerging polypeptides from interaction with other cytoplasmic proteins to ensure appropriate nascent protein targeting. The NAC complex also promotes mitochondrial protein import by enhancing productive ribosome interactions with the outer mitochondrial membrane and blocks the inappropriate interaction of ribosomes translating non-secretory nascent polypeptides with translocation sites in the membrane of the endoplasmic reticulum. EGD2 may also be involved in transcription regulation. This chain is Nascent polypeptide-associated complex subunit alpha (EGD2), found in Debaryomyces hansenii (strain ATCC 36239 / CBS 767 / BCRC 21394 / JCM 1990 / NBRC 0083 / IGC 2968) (Yeast).